Reading from the N-terminus, the 400-residue chain is Acetate kinase (400 aa).

N10 contributes to the Mg(2+) binding site. K17 lines the ATP pocket. Residue R91 coordinates substrate. D148 functions as the Proton donor/acceptor in the catalytic mechanism. ATP contacts are provided by residues 208-212, 283-285, and 331-335; these read HLGNG, DCR, and GIGEN. Mg(2+) is bound at residue E385.

The protein belongs to the acetokinase family. In terms of assembly, homodimer. The cofactor is Mg(2+). Mn(2+) serves as cofactor.

Its subcellular location is the cytoplasm. It catalyses the reaction acetate + ATP = acetyl phosphate + ADP. It functions in the pathway metabolic intermediate biosynthesis; acetyl-CoA biosynthesis; acetyl-CoA from acetate: step 1/2. Catalyzes the formation of acetyl phosphate from acetate and ATP. Can also catalyze the reverse reaction. The protein is Acetate kinase of Shewanella putrefaciens (strain CN-32 / ATCC BAA-453).